The chain runs to 165 residues: SsrA-binding protein (165 aa).

Residues glutamine 135–arginine 158 are compositionally biased toward basic and acidic residues. Residues glutamine 135–asparagine 165 are disordered.

It belongs to the SmpB family.

It is found in the cytoplasm. In terms of biological role, required for rescue of stalled ribosomes mediated by trans-translation. Binds to transfer-messenger RNA (tmRNA), required for stable association of tmRNA with ribosomes. tmRNA and SmpB together mimic tRNA shape, replacing the anticodon stem-loop with SmpB. tmRNA is encoded by the ssrA gene; the 2 termini fold to resemble tRNA(Ala) and it encodes a 'tag peptide', a short internal open reading frame. During trans-translation Ala-aminoacylated tmRNA acts like a tRNA, entering the A-site of stalled ribosomes, displacing the stalled mRNA. The ribosome then switches to translate the ORF on the tmRNA; the nascent peptide is terminated with the 'tag peptide' encoded by the tmRNA and targeted for degradation. The ribosome is freed to recommence translation, which seems to be the essential function of trans-translation. The chain is SsrA-binding protein from Mycolicibacterium gilvum (strain PYR-GCK) (Mycobacterium gilvum (strain PYR-GCK)).